A 59-amino-acid chain; its full sequence is Protein B3 (59 aa).

This is Protein B3 (B3) from Homo sapiens (Human).